The sequence spans 621 residues: tRNA uridine 5-carboxymethylaminomethyl modification enzyme MnmG (621 aa).

9-14 (GGGHAG) serves as a coordination point for FAD. An NAD(+)-binding site is contributed by 270–284 (GPRYCPSIEDKIVKF).

It belongs to the MnmG family. In terms of assembly, homodimer. Heterotetramer of two MnmE and two MnmG subunits. FAD serves as cofactor.

It is found in the cytoplasm. NAD-binding protein involved in the addition of a carboxymethylaminomethyl (cmnm) group at the wobble position (U34) of certain tRNAs, forming tRNA-cmnm(5)s(2)U34. In Borreliella burgdorferi (strain ATCC 35210 / DSM 4680 / CIP 102532 / B31) (Borrelia burgdorferi), this protein is tRNA uridine 5-carboxymethylaminomethyl modification enzyme MnmG.